We begin with the raw amino-acid sequence, 254 residues long: tRNA uridine(34) hydroxylase (254 aa).

One can recognise a Rhodanese domain in the interval 123–217 (QDPNVILLDT…YLESIPEGES (95 aa)). The active-site Cysteine persulfide intermediate is the Cys177.

Belongs to the TrhO family.

The enzyme catalyses uridine(34) in tRNA + AH2 + O2 = 5-hydroxyuridine(34) in tRNA + A + H2O. In terms of biological role, catalyzes oxygen-dependent 5-hydroxyuridine (ho5U) modification at position 34 in tRNAs. The chain is tRNA uridine(34) hydroxylase from Legionella pneumophila (strain Lens).